We begin with the raw amino-acid sequence, 274 residues long: NH(3)-dependent NAD(+) synthetase (274 aa).

Residue Gly-46 to Ser-53 participates in ATP binding. Asp-52 is a binding site for Mg(2+). Residue Arg-140 participates in deamido-NAD(+) binding. Thr-160 contributes to the ATP binding site. Glu-165 lines the Mg(2+) pocket. 2 residues coordinate deamido-NAD(+): Lys-173 and Asp-180. Residues Lys-189 and Thr-211 each coordinate ATP. Residue His-260–Lys-261 coordinates deamido-NAD(+).

This sequence belongs to the NAD synthetase family. As to quaternary structure, homodimer.

The catalysed reaction is deamido-NAD(+) + NH4(+) + ATP = AMP + diphosphate + NAD(+) + H(+). The protein operates within cofactor biosynthesis; NAD(+) biosynthesis; NAD(+) from deamido-NAD(+) (ammonia route): step 1/1. In terms of biological role, catalyzes the ATP-dependent amidation of deamido-NAD to form NAD. Uses ammonia as a nitrogen source. The sequence is that of NH(3)-dependent NAD(+) synthetase from Streptococcus pneumoniae serotype 2 (strain D39 / NCTC 7466).